Here is a 662-residue protein sequence, read N- to C-terminus: Intracellular exo-alpha-(1-&gt;5)-L-arabinofuranosidase (662 aa).

3 residues coordinate alpha-L-arabinofuranose: Glu27, Asn72, and Asn174. Glu175 acts as the Proton donor/acceptor in catalysis. Residues Tyr246, Glu294, and Gln352 each contribute to the alpha-L-arabinofuranose site. Glu294 (nucleophile) is an active-site residue. Disordered regions lie at residues 454–483 (LADA…SLRD), 497–548 (SIRC…RTAR), and 588–662 (WTRW…ARRC). Low complexity predominate over residues 519–533 (TGTPPAAPPSSSSAP). A compositionally biased stretch (basic and acidic residues) spans 537–547 (PTARRSPDRTA). Low complexity-rich tracts occupy residues 590–603 (RWAP…PSRR), 628–641 (RRSP…TPAP), and 649–662 (AGAS…ARRC).

Belongs to the glycosyl hydrolase 51 family. Homohexamer; trimer of dimers.

It is found in the cytoplasm. The catalysed reaction is Hydrolysis of terminal non-reducing alpha-L-arabinofuranoside residues in alpha-L-arabinosides.. It participates in glycan metabolism; L-arabinan degradation. Involved in the degradation of arabinan and is a key enzyme in the complete degradation of the plant cell wall. Catalyzes the cleavage of terminal alpha-(1-&gt;5)-arabinofuranosyl bonds in different hemicellulosic homopolysaccharides (arabino-oligoxylosides, branched and debranched arabinans). It acts rapidly on the short-chain arabino-oligoxylosides from digestion of xylan with xylanases. It hydrolyzes slowly arabinan and arabinoxylan from wheat and rye flour. In Streptomyces lividans, this protein is Intracellular exo-alpha-(1-&gt;5)-L-arabinofuranosidase.